Reading from the N-terminus, the 342-residue chain is Holliday junction branch migration complex subunit RuvB (342 aa).

The tract at residues 1–179 (MTNILSPEKI…FGIPMRLNFY (179 aa)) is large ATPase domain (RuvB-L). ATP contacts are provided by residues isoleucine 18, arginine 19, glycine 60, lysine 63, threonine 64, threonine 65, 126–128 (EDF), arginine 169, tyrosine 179, and arginine 216. Residue threonine 64 coordinates Mg(2+). The segment at 180 to 250 (NTEELKKVLN…ISDFGLNRLE (71 aa)) is small ATPAse domain (RuvB-S). The head domain (RuvB-H) stretch occupies residues 253-342 (HIGLDSNDYR…HQFNIFNENE (90 aa)). The DNA site is built by arginine 289, arginine 308, and arginine 313.

Belongs to the RuvB family. In terms of assembly, homohexamer. Forms an RuvA(8)-RuvB(12)-Holliday junction (HJ) complex. HJ DNA is sandwiched between 2 RuvA tetramers; dsDNA enters through RuvA and exits via RuvB. An RuvB hexamer assembles on each DNA strand where it exits the tetramer. Each RuvB hexamer is contacted by two RuvA subunits (via domain III) on 2 adjacent RuvB subunits; this complex drives branch migration. In the full resolvosome a probable DNA-RuvA(4)-RuvB(12)-RuvC(2) complex forms which resolves the HJ.

Its subcellular location is the cytoplasm. It carries out the reaction ATP + H2O = ADP + phosphate + H(+). Its function is as follows. The RuvA-RuvB-RuvC complex processes Holliday junction (HJ) DNA during genetic recombination and DNA repair, while the RuvA-RuvB complex plays an important role in the rescue of blocked DNA replication forks via replication fork reversal (RFR). RuvA specifically binds to HJ cruciform DNA, conferring on it an open structure. The RuvB hexamer acts as an ATP-dependent pump, pulling dsDNA into and through the RuvAB complex. RuvB forms 2 homohexamers on either side of HJ DNA bound by 1 or 2 RuvA tetramers; 4 subunits per hexamer contact DNA at a time. Coordinated motions by a converter formed by DNA-disengaged RuvB subunits stimulates ATP hydrolysis and nucleotide exchange. Immobilization of the converter enables RuvB to convert the ATP-contained energy into a lever motion, pulling 2 nucleotides of DNA out of the RuvA tetramer per ATP hydrolyzed, thus driving DNA branch migration. The RuvB motors rotate together with the DNA substrate, which together with the progressing nucleotide cycle form the mechanistic basis for DNA recombination by continuous HJ branch migration. Branch migration allows RuvC to scan DNA until it finds its consensus sequence, where it cleaves and resolves cruciform DNA. The protein is Holliday junction branch migration complex subunit RuvB of Rickettsia felis (strain ATCC VR-1525 / URRWXCal2) (Rickettsia azadi).